We begin with the raw amino-acid sequence, 148 residues long: Small ribosomal subunit protein eS19 (148 aa).

It belongs to the eukaryotic ribosomal protein eS19 family.

This is Small ribosomal subunit protein eS19 (rps19) from Dictyostelium discoideum (Social amoeba).